We begin with the raw amino-acid sequence, 78 residues long: UPF0335 protein A1C_00850 (78 aa).

Belongs to the UPF0335 family.

This Rickettsia akari (strain Hartford) protein is UPF0335 protein A1C_00850.